A 104-amino-acid chain; its full sequence is Large ribosomal subunit protein bL21 (104 aa).

Belongs to the bacterial ribosomal protein bL21 family. In terms of assembly, part of the 50S ribosomal subunit. Contacts protein L20.

In terms of biological role, this protein binds to 23S rRNA in the presence of protein L20. The chain is Large ribosomal subunit protein bL21 from Allorhizobium ampelinum (strain ATCC BAA-846 / DSM 112012 / S4) (Agrobacterium vitis (strain S4)).